Here is a 295-residue protein sequence, read N- to C-terminus: Probable WRKY transcription factor 46 (295 aa).

Positions 98–166 form a DNA-binding region, WRKY; the sequence is QENGSIDDGH…YLGNHTCNNI (69 aa).

The protein belongs to the WRKY group III family. Binds to BZR2/BES1 to cooperatively regulate the expression of target genes. Post-translationally, phosphorylated and destabilized by ASK7/BIN2. As to expression, expressed in guard cells, hypocotyls, and in the vascular tissues of cotyledon and root. Mostly expressed in roots, at lower levels in leaves and petioles, and, to a lower extent, in stems, flowers and siliques.

It localises to the nucleus. Its function is as follows. Transcription factor involved in the regulation of osmotic stress responses and stomatal movement. Interacts specifically with the W box (5'-(T)TGAC[CT]-3'), a frequently occurring elicitor-responsive cis-acting element. Positive regulator of EDS1-dependent defense against E.amylovora. Together with WRKY70 and WRKY53, promotes resistance to P.syringae, probably by enhancing salicylic acid (SA)- dependent genes. Contributes to the suppression of jasmonic acid (MeJA)-induced expression of PDF1.2. Together with WRKY54 and WRKY70, promotes brassinosteroid (BR)-regulated plant growth but prevent drought response by modulating gene expression. The polypeptide is Probable WRKY transcription factor 46 (WRKY46) (Arabidopsis thaliana (Mouse-ear cress)).